The following is a 7094-amino-acid chain: Replicase polyprotein 1ab (7094 aa).

The CoV Nsp1 globular domain occupies 54–196 (PENHVMVDCR…PWVMYLRKCG (143 aa)). One can recognise a BetaCoV Nsp1 C-terminal domain in the interval 216–246 (FKVEDAYDLVHDEPKGKFSKKAYALIRGYRG). One can recognise a CoV Nsp2 N-terminal domain in the interval 250–519 (LLYVDQYGCD…LICKALYLDY (270 aa)). Zn(2+)-binding residues include Cys-392, Cys-397, Cys-413, and Cys-416. The C4 stretch occupies residues 392 to 416 (CEQDLCDFKGWVPGNMIDGFACTTC). The CoV Nsp2 middle domain occupies 524-713 (CGNLHQRELL…AQAFRSVAKV (190 aa)). The region spanning 733–851 (RRRICLSGSK…LDQAWRVPCA (119 aa)) is the CoV Nsp2 C-terminal domain. The Ubiquitin-like 1 domain occupies 853-966 (RRVTFKEQPT…LYCAFTAPED (114 aa)). Positions 1036-1274 (DLESVIQDYE…IAQLYGSCIT (239 aa)) constitute a Peptidase C16 1 domain. Residue Cys-1074 is the For PL1-PRO activity of the active site. Zn(2+) contacts are provided by Cys-1151, Cys-1154, Cys-1177, and Cys-1179. The C4-type 1 zinc-finger motif lies at 1151–1179 (CIKCDLALKLKGLDAMFFYGDVVSHVCKC). Catalysis depends on for PL1-PRO activity residues His-1225 and Asp-1236. The 161-residue stretch at 1275 to 1435 (PNVCFVKGDI…LISKCQITAV (161 aa)) folds into the Macro domain. Residues 1491 to 1563 (DDARTFVQSN…VAQIKALFLD (73 aa)) enclose the DPUP domain. Residues 1562 to 1617 (LDKVDILLTVDGVNFTNRFVPVGENFGKSLGNVFCDGVNVTKHKCDINYKGKVFFQ) form the Ubiquitin-like 2 domain. A Peptidase C16 2 domain is found at 1631-1892 (SSFNFDQKEL…KIEYKPDLSQ (262 aa)). Cys-1671 functions as the For PL2-PRO activity in the catalytic mechanism. Zn(2+) contacts are provided by Cys-1749, Cys-1751, Cys-1783, and Cys-1785. The segment at 1749–1785 (CKCGVKQEQRTGVDAVMHFGTLSREDLEIGYTVDCSC) adopts a C4-type 2 zinc-finger fold. Residues His-1828 and Asp-1842 each act as for PL2-PRO activity in the active site. A Nucleic acid-binding domain is found at 1906–2007 (IKAQFKTFEK…TYFNRPLLVD (102 aa)). One can recognise a G2M domain in the interval 2020–2169 (DDGGDISESD…ADNKVIYTTE (150 aa)). The next 3 membrane-spanning stretches (helical) occupy residues 2138–2158 (ISAC…WIKI), 2199–2219 (ACII…NVIF), and 2227–2247 (IGFL…TFSL). The interval 2138–2385 (ISACFNFIKW…ASFIKLFSLF (248 aa)) is HD1. Residues 2235 to 2296 (GKIAQWIKST…AIDVVQYEAD (62 aa)) form the 3Ecto domain. Disulfide bonds link Cys-2251–Cys-2275 and Cys-2266–Cys-2272. 3 consecutive transmembrane segments (helical) span residues 2313–2333 (LIVS…LISI), 2343–2363 (LFML…ANML), and 2365–2385 (AHVF…FSLF). The interval 2383–2473 (SLFRHVAYGC…ELKRPIQPTD (91 aa)) is Y1. A CoV Nsp3 Y domain is found at 2383–2750 (SLFRHVAYGC…LTTPFSLKGG (368 aa)). Positions 2387, 2392, 2397, 2400, 2433, 2436, 2440, and 2443 each coordinate Zn(2+). The tract at residues 2387 to 2400 (HVAYGCSKPGCLFC) is ZF1. Residues 2433–2443 (CSKHQWNCIDC) are ZF2. The interval 2474-2566 (VAYHTVTDVK…MVDKNLITTA (93 aa)) is Y2. The tract at residues 2474-2750 (VAYHTVTDVK…LTTPFSLKGG (277 aa)) is coV-Y. Residues 2567–2649 (NTGTSVTETM…DSVMSAVSAG (83 aa)) are Y3. A Y4 region spans residues 2650–2750 (LELTDESCNN…LTTPFSLKGG (101 aa)). Transmembrane regions (helical) follow at residues 2752 to 2772 (VFSY…IGLW), 2824 to 2844 (STFG…VAVV), 3009 to 3029 (VFDL…FLAL), 3031 to 3051 (ASSI…YYLI), 3063 to 3083 (IVFV…VFQV), 3090 to 3110 (VYAI…SVIM), and 3115 to 3135 (LVMY…SVVV). Residues 2752–3135 (VFSYFVYVCF…FCLLYISVVV (384 aa)) form an HD2 region. Residues 3149 to 3246 (LGTSVRSDGT…TASVSTSFLQ (98 aa)) form the Nsp4C domain. One can recognise a Peptidase C30 domain in the interval 3247–3549 (SGIVKMVNPT…YQQLAGIKLQ (303 aa)). Catalysis depends on for 3CL-PRO activity residues His-3287 and Cys-3391. Transmembrane regions (helical) follow at residues 3558–3578 (GIVC…TAFV), 3588–3608 (TNML…MLLV), 3614–3634 (YLTM…YLVV), 3657–3677 (TYTD…FVTL), 3684–3704 (LFSF…WYMG), 3711–3731 (ILLM…LSMA), and 3755–3775 (IVLV…GLFS). The interval 3558-3775 (GIVCWIMAST…IISCYWGLFS (218 aa)) is HD3. Residues 3837 to 3925 (SKLTDVKCAN…DYAKDNTVLQ (89 aa)) form the RdRp Nsp7 cofactor domain. One can recognise a RdRp Nsp8 cofactor domain in the interval 3926–4122 (ALQSEFVNMA…HNEVSATVLQ (197 aa)). The Nsp9 ssRNA-binding domain maps to 4123 to 4232 (NNELMPAKLK…GTISSTVRLQ (110 aa)). One can recognise an ExoN/MTase coactivator domain in the interval 4233 to 4370 (AGTATEYASN…CVSTDTTVQS (138 aa)). Residues Cys-4306, Cys-4309, His-4315, Cys-4322, Cys-4348, Cys-4351, Cys-4359, and Cys-4361 each contribute to the Zn(2+) site. Zinc fingers lie at residues 4306–4322 (CIYC…DGLC) and 4348–4361 (CQVC…SCSC). A NiRAN domain is found at 4375–4630 (FLNRVRGTSV…DCELYVNNAY (256 aa)). Residues Asn-4578 and Asp-4587 each coordinate Mn(2+). In terms of domain architecture, Nsp12 Interface spans 4631–4729 (RLFDLVQYDF…MNMDVDTHRY (99 aa)). The Zn(2+) site is built by His-4660, Cys-4666, Cys-4671, Cys-4675, and Cys-4852. Residues 4730 to 5297 (RLSLKDLLLY…NMYLRSAVMQ (568 aa)) enclose the Nsp12 RNA-dependent RNA polymerase domain. The tract at residues 4732–4946 (SLKDLLLYAA…HQKCLKSIAA (215 aa)) is rdRp Fingers N-ter. The segment at 4947 to 4985 (TRGVPVVIGTTKFYGGWDDMLRRLIKDVDNPVLMGWDYP) is rdRp Palm N-ter. The RdRp catalytic domain maps to 4977 to 5139 (PVLMGWDYPK…CYNSDYASKG (163 aa)). The rdRp Fingers C-ter stretch occupies residues 4986–5044 (KCDRAMPNILRIVSSLVLARKHEACCSQSDRFYRLANECAQVLSEIVMCGGCYYVKPGG). Zn(2+) is bound by residues His-5007, Cys-5010, and Cys-5011. The interval 5045–5180 (TSSGDATTAF…NNGPHEFCSQ (136 aa)) is rdRp Palm C-ter. Residues Ser-5124, Asp-5125, and Asp-5126 contribute to the active site. The interval 5181–5297 (HTMLVKMDGD…NMYLRSAVMQ (117 aa)) is rdRp Thumb. A CV ZBD domain is found at 5298–5410 (SVGACVVCSS…DDFNRIASCK (113 aa)). Residues Cys-5302, Cys-5305, Cys-5313, Cys-5316, Cys-5323, Cys-5326, His-5330, His-5336, Cys-5347, Cys-5352, Cys-5369, and His-5372 each coordinate Zn(2+). A (+)RNA virus helicase ATP-binding domain is found at 5553–5734 (SVLETFQNNV…MCCLGPDIFL (182 aa)). Residue 5578-5585 (GPPGTGKS) participates in ATP binding. One can recognise a (+)RNA virus helicase C-terminal domain in the interval 5735-5904 (GTCYRCPKEI…VETRVQCSTN (170 aa)). The region spanning 5971–6186 (LFITKEEAVK…RCLAVYDCFC (216 aa)) is the ExoN domain. Catalysis depends on residues Asp-5989, Glu-5991, and Glu-6090. The Zn(2+) site is built by Cys-6106, Cys-6109, Cys-6125, His-6128, His-6156, Cys-6160, and His-6163. Residues His-6167 and Asp-6172 contribute to the active site. Residue Cys-6178 participates in Zn(2+) binding. One can recognise an N7-MTase domain in the interval 6195 to 6421 (YPIISNELSI…NLWNTFTKLQ (227 aa)). An S-adenosyl-L-methionine-binding site is contributed by 6230 to 6236 (DIGNPKA). Positions 6308–6322 (CNGGSLYVNKHAFHT) are gpppA-binding. Cys-6346, Cys-6367, Cys-6378, and His-6381 together coordinate Zn(2+). Positions 6422-6482 (SLENVVYNLV…NVAVELFAKR (61 aa)) constitute a Nsp15 N-terminal oligomerization domain. One can recognise an AV-Nsp11N/CoV-Nsp15M domain in the interval 6483–6603 (SIRHHPELKL…FAVRKEGQDV (121 aa)). The region spanning 6653-6792 (TCRTDMEKDF…NDEKVMTFYP (140 aa)) is the NendoU domain. Catalysis depends on residues His-6683, His-6698, Lys-6738, Lys-6841, Asp-6925, Lys-6965, and Glu-6998. The Nidovirus-type SAM-dependent 2'-O-MTase domain occupies 6797-7091 (ASDWKPGYSM…KEVFVGDSLV (295 aa)).

This sequence belongs to the coronaviruses polyprotein 1ab family. Interacts with host PHB and PHB2. As to quaternary structure, interacts with papain-like protease nsp3 and non-structural protein 6. In terms of assembly, monomer. Homodimer. Only the homodimer shows catalytic activity. Interacts with nsp8 and nsp12 to form the replication-transcription complex (RTC): nsp12, nsp7, two subunits of nsp8, and up to two subunits of nsp13. As to quaternary structure, interacts with nsp7, nsp13 and nsp12 to form the replication-transcription complex (RTC): nsp12, nsp7, two subunits of nsp8, and up to two subunits of nsp13. In terms of assembly, interacts with nsp12. Interacts with proofreading exoribonuclease nsp14 and 2'-O-methyltransferase nsp16; these interactions enhance nsp14 and nsp16 enzymatic activities. As to quaternary structure, interacts with nsp7 and nsp8 to form the replication-transcription complex (RTC): nsp12, nsp7, two subunits of nsp8, and up to two subunits of nsp13. Interacts with nsp9. In terms of assembly, interacts with nsp8 to form the replication-transcription complex (RTC): nsp12, nsp7, two subunits of nsp8, and up to two subunits of nsp13. Mn(2+) serves as cofactor. It depends on Mg(2+) as a cofactor. In terms of processing, specific enzymatic cleavages in vivo by its own proteases yield mature proteins. 3CL-PRO and PL-PRO proteinases are autocatalytically processed.

The protein localises to the host membrane. It is found in the host cytoplasm. It localises to the host perinuclear region. The protein resides in the host endoplasmic reticulum-Golgi intermediate compartment. It catalyses the reaction RNA(n) + a ribonucleoside 5'-triphosphate = RNA(n+1) + diphosphate. It carries out the reaction ATP + H2O = ADP + phosphate + H(+). The enzyme catalyses Thiol-dependent hydrolysis of ester, thioester, amide, peptide and isopeptide bonds formed by the C-terminal Gly of ubiquitin (a 76-residue protein attached to proteins as an intracellular targeting signal).. The catalysed reaction is a 5'-end (N(7)-methyl 5'-triphosphoguanosine)-ribonucleoside in mRNA + S-adenosyl-L-methionine = a 5'-end (N(7)-methyl 5'-triphosphoguanosine)-(2'-O-methyl-ribonucleoside) in mRNA + S-adenosyl-L-homocysteine + H(+). It catalyses the reaction uridylyl-uridylyl-ribonucleotide-RNA = a 3'-end uridylyl-2',3'-cyclophospho-uridine-RNA + a 5'-end dephospho-ribonucleoside-RNA. It carries out the reaction a 5'-end diphospho-ribonucleoside in mRNA + GTP + H(+) = a 5'-end (5'-triphosphoguanosine)-ribonucleoside in mRNA + diphosphate. The enzyme catalyses a 5'-end (5'-triphosphoguanosine)-ribonucleoside in mRNA + S-adenosyl-L-methionine = a 5'-end (N(7)-methyl 5'-triphosphoguanosine)-ribonucleoside in mRNA + S-adenosyl-L-homocysteine. The replicase polyprotein of coronaviruses is a multifunctional protein: it contains the activities necessary for the transcription of negative stranded RNA, leader RNA, subgenomic mRNAs and progeny virion RNA as well as proteinases responsible for the cleavage of the polyprotein into functional products. Functionally, inhibits host translation by interacting with the 40S ribosomal subunit. The nsp1-40S ribosome complex further induces an endonucleolytic cleavage near the 5'UTR of host mRNAs, targeting them for degradation. Viral mRNAs are not susceptible to nsp1-mediated endonucleolytic RNA cleavage thanks to the presence of a 5'-end leader sequence and are therefore protected from degradation. By suppressing host gene expression, nsp1 facilitates efficient viral gene expression in infected cells and evasion from host immune response. In terms of biological role, may play a role in the modulation of host cell survival signaling pathway by interacting with host PHB and PHB2. Indeed, these two proteins play a role in maintaining the functional integrity of the mitochondria and protecting cells from various stresses. Its function is as follows. Responsible for the cleavages located at the N-terminus of the replicase polyprotein. In addition, PL-PRO possesses a deubiquitinating/deISGylating activity and processes both 'Lys-48'- and 'Lys-63'-linked polyubiquitin chains from cellular substrates. Participates together with nsp4 in the assembly of virally-induced cytoplasmic double-membrane vesicles necessary for viral replication. Antagonizes innate immune induction of type I interferon by blocking the phosphorylation, dimerization and subsequent nuclear translocation of host IRF3. Also prevents host NF-kappa-B signaling. Participates in the assembly of virally-induced cytoplasmic double-membrane vesicles necessary for viral replication. Functionally, cleaves the C-terminus of replicase polyprotein at 11 sites. Recognizes substrates containing the core sequence [ILMVF]-Q-|-[SGACN]. Also able to bind an ADP-ribose-1''-phosphate (ADRP). In terms of biological role, plays a role in the initial induction of autophagosomes from host endoplasmic reticulum. Later, limits the expansion of these phagosomes that are no longer able to deliver viral components to lysosomes. Its function is as follows. Forms a hexadecamer with nsp8 (8 subunits of each) that may participate in viral replication by acting as a primase. Alternatively, may synthesize substantially longer products than oligonucleotide primers. Forms a hexadecamer with nsp7 (8 subunits of each) that may participate in viral replication by acting as a primase. Alternatively, may synthesize substantially longer products than oligonucleotide primers. Functionally, forms a primer, NSP9-pU, which is utilized by the polymerase for the initiation of RNA chains. Interacts with ribosome signal recognition particle RNA (SRP). Together with NSP8, suppress protein integration into the cell membrane, thereby disrupting host immune defenses. In terms of biological role, plays a pivotal role in viral transcription by stimulating both nsp14 3'-5' exoribonuclease and nsp16 2'-O-methyltransferase activities. Therefore plays an essential role in viral mRNAs cap methylation. Its function is as follows. RNA-directed RNA polymerase that catalyzes the transcription of viral genomic and subgenomic RNAs. Acts in complex with nsp7 and nsp8 to transcribe both the minus and positive strands of genomic RNA. The kinase-like NiRAN domain of NSP12 attaches one or more nucleotides to the amino terminus of NSP9, forming a covalent RNA-protein intermediate that serves as transcription/replication primer. Subgenomic RNAs (sgRNAs) are formed by discontinuous transcription: The polymerase has the ability to pause at transcription-regulating sequences (TRS) and jump to the leader TRS, resulting in a major deletion. This creates a series of subgenomic RNAs that are replicated, transcribed and translated. In addition, Nsp12 is a subunit of the viral RNA capping enzyme that catalyzes the RNA guanylyltransferase reaction for genomic and sub-genomic RNAs. Subsequently, the NiRAN domain transfers RNA to GDP, and forms the core cap structure GpppA-RNA. Multi-functional protein with a zinc-binding domain in N-terminus displaying RNA and DNA duplex-unwinding activities with 5' to 3' polarity. Activity of helicase is dependent on magnesium. Functionally, plays a role in viral RNA synthesis through two distinct activities. The N7-guanine methyltransferase activity plays a role in the formation of the cap structure GpppA-RNA. The proofreading exoribonuclease reduces the sensitivity of the virus to RNA mutagens during replication. This activity acts on both ssRNA and dsRNA in a 3'-5' direction. In terms of biological role, plays a role in viral transcription/replication and prevents the simultaneous activation of host cell dsRNA sensors, such as MDA5/IFIH1, OAS, and PKR. Acts by degrading the 5'-polyuridines generated during replication of the poly(A) region of viral genomic and subgenomic RNAs. Catalyzes a two-step reaction in which a 2'3'-cyclic phosphate (2'3'-cP) is first generated by 2'-O transesterification, which is then hydrolyzed to a 3'-phosphate (3'-P). If not degraded, poly(U) RNA would hybridize with poly(A) RNA tails and activate host dsRNA sensors. Its function is as follows. Methyltransferase that mediates mRNA cap 2'-O-ribose methylation to the 5'-cap structure of viral mRNAs. N7-methyl guanosine cap is a prerequisite for binding of nsp16. Therefore plays an essential role in viral mRNAs cap methylation which is essential to evade immune system. In Bos taurus (Bovine), this protein is Replicase polyprotein 1ab (rep).